The sequence spans 294 residues: Nucleotide-binding protein CPF_0343 (294 aa).

8-15 (GLSGAGKT) is an ATP binding site. 59 to 62 (DIRG) serves as a coordination point for GTP.

Belongs to the RapZ-like family.

In terms of biological role, displays ATPase and GTPase activities. The sequence is that of Nucleotide-binding protein CPF_0343 from Clostridium perfringens (strain ATCC 13124 / DSM 756 / JCM 1290 / NCIMB 6125 / NCTC 8237 / Type A).